Reading from the N-terminus, the 215-residue chain is Phosphoenolpyruvate guanylyltransferase (215 aa).

Phosphoenolpyruvate contacts are provided by T144, G159, and S162.

This sequence belongs to the CofC family.

The catalysed reaction is phosphoenolpyruvate + GTP + H(+) = enolpyruvoyl-2-diphospho-5'-guanosine + diphosphate. Its pathway is cofactor biosynthesis; coenzyme F420 biosynthesis. Its function is as follows. Guanylyltransferase that catalyzes the activation of phosphoenolpyruvate (PEP) as enolpyruvoyl-2-diphospho-5'-guanosine, via the condensation of PEP with GTP. It is involved in the biosynthesis of coenzyme F420, a hydride carrier cofactor. The sequence is that of Phosphoenolpyruvate guanylyltransferase from Geodermatophilus obscurus (strain ATCC 25078 / DSM 43160 / JCM 3152 / CCUG 61914 / KCC A-0152 / KCTC 9177 / NBRC 13315 / NRRL B-3577 / G-20).